The following is a 383-amino-acid chain: NifS-like protein (383 aa).

Pyridoxal 5'-phosphate is bound by residues 58 to 59 (SE) and 184 to 186 (SLN).

This sequence belongs to the class-V pyridoxal-phosphate-dependent aminotransferase family. NifS/IscS subfamily. Pyridoxal 5'-phosphate is required as a cofactor.

It is found in the virion. This chain is NifS-like protein, found in African swine fever virus (isolate Pig/Kenya/KEN-50/1950) (ASFV).